The chain runs to 120 residues: MFLLYEYDIFWAFLIISSVIPILAFLFSGILAPISKGPEKLSSYESGIEPMGDAWLQFRIRYYMFALVFVVFDVETVFLYPWAMSFDILGVSVFIEALIFVLILIVGLVYAWRKGALEWS.

The next 3 membrane-spanning stretches (helical) occupy residues 9 to 29, 64 to 84, and 88 to 108; these read IFWAFLIISSVIPILAFLFSG, MFALVFVVFDVETVFLYPWAM, and ILGVSVFIEALIFVLILIVGL.

It belongs to the complex I subunit 3 family. In terms of assembly, NDH is composed of at least 16 different subunits, 5 of which are encoded in the nucleus.

It localises to the plastid. Its subcellular location is the chloroplast thylakoid membrane. The catalysed reaction is a plastoquinone + NADH + (n+1) H(+)(in) = a plastoquinol + NAD(+) + n H(+)(out). It carries out the reaction a plastoquinone + NADPH + (n+1) H(+)(in) = a plastoquinol + NADP(+) + n H(+)(out). NDH shuttles electrons from NAD(P)H:plastoquinone, via FMN and iron-sulfur (Fe-S) centers, to quinones in the photosynthetic chain and possibly in a chloroplast respiratory chain. The immediate electron acceptor for the enzyme in this species is believed to be plastoquinone. Couples the redox reaction to proton translocation, and thus conserves the redox energy in a proton gradient. This Spinacia oleracea (Spinach) protein is NAD(P)H-quinone oxidoreductase subunit 3, chloroplastic.